The sequence spans 130 residues: Small ribosomal subunit protein uS9 (130 aa).

The protein belongs to the universal ribosomal protein uS9 family.

In Shewanella baltica (strain OS155 / ATCC BAA-1091), this protein is Small ribosomal subunit protein uS9.